The primary structure comprises 129 residues: UPF0102 protein Cag_1992 (129 aa).

It belongs to the UPF0102 family.

The sequence is that of UPF0102 protein Cag_1992 from Chlorobium chlorochromatii (strain CaD3).